A 241-amino-acid chain; its full sequence is Uridylate kinase (241 aa).

12-15 provides a ligand contact to ATP; that stretch reads KISG. The tract at residues 20 to 25 is involved in allosteric activation by GTP; it reads GDKGNG. G54 lines the UMP pocket. The ATP site is built by G55 and R59. UMP is bound by residues D74 and 135 to 142; that span reads TGNPYFST. N163, Y169, and D172 together coordinate ATP.

Belongs to the UMP kinase family. As to quaternary structure, homohexamer.

The protein localises to the cytoplasm. The enzyme catalyses UMP + ATP = UDP + ADP. Its pathway is pyrimidine metabolism; CTP biosynthesis via de novo pathway; UDP from UMP (UMPK route): step 1/1. Its activity is regulated as follows. Allosterically activated by GTP. Inhibited by UTP. Its function is as follows. Catalyzes the reversible phosphorylation of UMP to UDP. In Lactobacillus helveticus (strain DPC 4571), this protein is Uridylate kinase.